We begin with the raw amino-acid sequence, 388 residues long: 3-oxo-tetronate kinase (388 aa).

Residues S258 and 360-363 (GGET) contribute to the ATP site.

The protein belongs to the four-carbon acid sugar kinase family.

It carries out the reaction 3-dehydro-L-erythronate + ATP = 3-dehydro-4-O-phospho-L-erythronate + ADP + H(+). The catalysed reaction is 3-dehydro-D-erythronate + ATP = 3-dehydro-4-O-phospho-D-erythronate + ADP + H(+). Functionally, catalyzes the ATP-dependent phosphorylation of 3-oxo-tetronate to 3-oxo-tetronate 4-phosphate. The polypeptide is 3-oxo-tetronate kinase (Escherichia coli (strain K12)).